The chain runs to 259 residues: 1-(5-phosphoribosyl)-5-[(5-phosphoribosylamino)methylideneamino] imidazole-4-carboxamide isomerase (259 aa).

Asp-8 (proton acceptor) is an active-site residue. Catalysis depends on Asp-129, which acts as the Proton donor.

The protein belongs to the HisA/HisF family.

Its subcellular location is the cytoplasm. It carries out the reaction 1-(5-phospho-beta-D-ribosyl)-5-[(5-phospho-beta-D-ribosylamino)methylideneamino]imidazole-4-carboxamide = 5-[(5-phospho-1-deoxy-D-ribulos-1-ylimino)methylamino]-1-(5-phospho-beta-D-ribosyl)imidazole-4-carboxamide. Its pathway is amino-acid biosynthesis; L-histidine biosynthesis; L-histidine from 5-phospho-alpha-D-ribose 1-diphosphate: step 4/9. The protein is 1-(5-phosphoribosyl)-5-[(5-phosphoribosylamino)methylideneamino] imidazole-4-carboxamide isomerase of Pelotomaculum thermopropionicum (strain DSM 13744 / JCM 10971 / SI).